The chain runs to 915 residues: Probable dipeptidyl-aminopeptidase B (915 aa).

The disordered stretch occupies residues 1-82 (MAPPFTDDPE…GAFLGPPGVP (82 aa)). Topologically, residues 1 to 94 (MAPPFTDDPE…RQPMDRGFRR (94 aa)) are cytoplasmic. Low complexity predominate over residues 15 to 32 (STSRLSQDSLSSVSTTSL). Residues 36-62 (RIQEEMDRDPSASRSARRDLLPATKDE) show a composition bias toward basic and acidic residues. Residues 95 to 115 (ILIIIGAVFVGAWLAGLGIFV) traverse the membrane as a helical; Signal-anchor for type II membrane protein segment. Residues 116 to 915 (LSGSYKHESD…IDTKKRRHVS (800 aa)) lie on the Vacuolar side of the membrane. N-linked (GlcNAc...) asparagine glycosylation is found at asparagine 355 and asparagine 577. Serine 760 functions as the Charge relay system in the catalytic mechanism. A glycan (N-linked (GlcNAc...) asparagine) is linked at asparagine 819. Catalysis depends on charge relay system residues aspartate 837 and histidine 870.

It belongs to the peptidase S9B family.

It is found in the vacuole membrane. The catalysed reaction is Release of an N-terminal dipeptide, Xaa-Yaa-|-Zaa-, from a polypeptide, preferentially when Yaa is Pro, provided Zaa is neither Pro nor hydroxyproline.. In terms of biological role, type IV dipeptidyl-peptidase which removes N-terminal dipeptides sequentially from polypeptides having unsubstituted N-termini provided that the penultimate residue is proline. The protein is Probable dipeptidyl-aminopeptidase B (DAPB) of Metarhizium robertsii (strain ARSEF 23 / ATCC MYA-3075) (Metarhizium anisopliae (strain ARSEF 23)).